A 368-amino-acid polypeptide reads, in one-letter code: Zinc finger protein 24 (368 aa).

Lys-22 participates in a covalent cross-link: Glycyl lysine isopeptide (Lys-Gly) (interchain with G-Cter in SUMO2). Lys-27 participates in a covalent cross-link: Glycyl lysine isopeptide (Lys-Gly) (interchain with G-Cter in SUMO1); alternate. Residue Lys-27 forms a Glycyl lysine isopeptide (Lys-Gly) (interchain with G-Cter in SUMO2); alternate linkage. Residues 52-134 (RQRFRQFGYQ…TVLEDLESEL (83 aa)) enclose the SCAN box domain. 2 positions are modified to phosphoserine: Ser-132 and Ser-142. Residues Lys-147, Lys-177, and Lys-236 each participate in a glycyl lysine isopeptide (Lys-Gly) (interchain with G-Cter in SUMO2) cross-link. The C2H2-type 1 zinc-finger motif lies at 251 to 273 (HICDECGKHFSQGSALILHQRIH). The interval 251-301 (HICDECGKHFSQGSALILHQRIHSGEKPYGCVECGKAFSRSSILVQHQRVH) is necessary and sufficient for nuclear localization. Phosphoserine is present on Ser-274. Glycyl lysine isopeptide (Lys-Gly) (interchain with G-Cter in SUMO2) cross-links involve residues Lys-277 and Lys-286. 3 C2H2-type zinc fingers span residues 279-301 (YGCV…QRVH), 307-329 (YKCL…QRIH), and 335-357 (YECV…QRRH). Position 292 is a phosphoserine (Ser-292). Residue Tyr-335 is modified to Phosphotyrosine. Residues Lys-361 and Lys-367 each participate in a glycyl lysine isopeptide (Lys-Gly) (interchain with G-Cter in SUMO2) cross-link.

This sequence belongs to the krueppel C2H2-type zinc-finger protein family. In terms of processing, sumoylated.

It is found in the nucleus. Transcription factor required for myelination of differentiated oligodendrocytes. Required for the conversion of oligodendrocytes from the premyelinating to the myelinating state. In the developing central nervous system (CNS), involved in the maintenance in the progenitor stage by promoting the cell cycle. Specifically binds to the 5'-TCAT-3' DNA sequence. Has transcription repressor activity in vitro. This chain is Zinc finger protein 24 (ZNF24), found in Pongo abelii (Sumatran orangutan).